The sequence spans 384 residues: Sialyltransferase-like protein 3 (384 aa).

The Cytoplasmic portion of the chain corresponds to 1-5; it reads MKRRH. A helical; Signal-anchor for type II membrane protein membrane pass occupies residues 6–26; that stretch reads WSHPSCGLLLLVAVFCLLLVF. Over 27-384 the chain is Lumenal; that stretch reads RCSQLRHSGD…FRLPPVSFYR (358 aa). Residue asparagine 241 is glycosylated (N-linked (GlcNAc...) asparagine).

This sequence belongs to the glycosyltransferase 29 family.

The protein resides in the golgi apparatus membrane. Its function is as follows. Possesses sialyltransferase-like activity in vitro. Transfers sialic acid to the glycoprotein asialofetuin. The transferred sialic acid is linked to galactose of Gal-beta-1,3-GalNAc through alpha-2,6-linkage. The sequence is that of Sialyltransferase-like protein 3 from Oryza sativa subsp. japonica (Rice).